The chain runs to 127 residues: Apolipoprotein C-IV (127 aa).

A signal peptide spans 1 to 27; that stretch reads MSLLRNRLQDLPALCLCVLVLACIGAC.

It belongs to the apolipoprotein C4 family.

Its subcellular location is the secreted. May participate in lipoprotein metabolism. This Papio hamadryas (Hamadryas baboon) protein is Apolipoprotein C-IV (APOC4).